The primary structure comprises 244 residues: Probable histone-lysine N-methyltransferase set-23 (244 aa).

Residues Glu-25 to Gly-86 enclose the Pre-SET domain. Residues Cys-27, Cys-29, Cys-33, Cys-39, Cys-41, Cys-65, Cys-69, Cys-71, and Cys-78 each contribute to the Zn(2+) site. In terms of domain architecture, SET spans Lys-89–Gly-213. S-adenosyl-L-methionine-binding positions include Lys-101–Phe-103, Asp-141, Tyr-143, Arg-170, and Asn-173–His-174. Residues Cys-176, Cys-225, Cys-227, and Cys-232 each contribute to the Zn(2+) site. Residues Asn-221–Pro-237 enclose the Post-SET domain.

This sequence belongs to the class V-like SAM-binding methyltransferase superfamily. Histone-lysine methyltransferase family. Suvar3-9 subfamily.

Its subcellular location is the nucleus. It localises to the chromosome. It catalyses the reaction L-lysyl-[histone] + S-adenosyl-L-methionine = N(6)-methyl-L-lysyl-[histone] + S-adenosyl-L-homocysteine + H(+). In terms of biological role, probable histone methyltransferase. Required for embryonic development. The polypeptide is Probable histone-lysine N-methyltransferase set-23 (set-23) (Caenorhabditis elegans).